The following is a 335-amino-acid chain: Glyceraldehyde-3-phosphate dehydrogenase (335 aa).

NAD(+) is bound by residues 10–11, aspartate 33, arginine 77, and serine 119; that span reads RI. Residues 150–152, threonine 181, 210–211, and arginine 233 contribute to the D-glyceraldehyde 3-phosphate site; these read SCT and TG. Residue cysteine 151 is the Nucleophile of the active site. NAD(+) is bound at residue asparagine 315.

It belongs to the glyceraldehyde-3-phosphate dehydrogenase family. As to quaternary structure, homotetramer.

It is found in the cytoplasm. The enzyme catalyses D-glyceraldehyde 3-phosphate + phosphate + NAD(+) = (2R)-3-phospho-glyceroyl phosphate + NADH + H(+). The protein operates within carbohydrate degradation; glycolysis; pyruvate from D-glyceraldehyde 3-phosphate: step 1/5. Catalyzes the oxidative phosphorylation of glyceraldehyde 3-phosphate (G3P) to 1,3-bisphosphoglycerate (BPG) using the cofactor NAD. The first reaction step involves the formation of a hemiacetal intermediate between G3P and a cysteine residue, and this hemiacetal intermediate is then oxidized to a thioester, with concomitant reduction of NAD to NADH. The reduced NADH is then exchanged with the second NAD, and the thioester is attacked by a nucleophilic inorganic phosphate to produce BPG. The polypeptide is Glyceraldehyde-3-phosphate dehydrogenase (gap) (Chlamydia pneumoniae (Chlamydophila pneumoniae)).